The sequence spans 311 residues: Small ribosomal subunit biogenesis GTPase RsgA (311 aa).

The 163-residue stretch at Leu77 to Phe239 folds into the CP-type G domain. Residues Asn126–Asp129 and Gly180–Thr188 contribute to the GTP site. Zn(2+) is bound by residues Cys263, Cys268, His270, and Cys276.

The protein belongs to the TRAFAC class YlqF/YawG GTPase family. RsgA subfamily. As to quaternary structure, monomer. Associates with 30S ribosomal subunit, binds 16S rRNA. Requires Zn(2+) as cofactor.

It localises to the cytoplasm. In terms of biological role, one of several proteins that assist in the late maturation steps of the functional core of the 30S ribosomal subunit. Helps release RbfA from mature subunits. May play a role in the assembly of ribosomal proteins into the subunit. Circularly permuted GTPase that catalyzes slow GTP hydrolysis, GTPase activity is stimulated by the 30S ribosomal subunit. The polypeptide is Small ribosomal subunit biogenesis GTPase RsgA (Azobacteroides pseudotrichonymphae genomovar. CFP2).